The primary structure comprises 898 residues: Transportin-1 (898 aa).

Position 1 is an N-acetylmethionine (Met1). HEAT repeat units lie at residues 19–46 (GLQQ…QKLE), 51–89 (YPDF…AHFQ), 98–131 (FIKS…KGEL), 137–174 (LLPK…LDSD), 181–211 (NIMI…QFII), 224–251 (FIEN…VMLL), 263–290 (HNIV…FWLT), 306–397 (PKLI…LANV), 405–433 (HILP…GAIA), 445–472 (PELI…TLSR), 486–519 (LKPL…EEEA), 527–560 (LAYI…ADSV), 568–606 (EYIQ…TALQ), 614–665 (EPVY…GLGG), 676–707 (ILTL…KACF), 715–748 (ADFM…IQMG), 756–791 (PMVL…YVCP), 799–832 (QQFI…ISVN), 841–872 (IFFC…KNQV), and 875–895 (ENWR…LAAF). The 69-residue stretch at 41-109 (VQQKLEQLNQ…KSECLNNIGD (69 aa)) folds into the Importin N-terminal domain. The disordered stretch occupies residues 347 to 374 (FHRSRTVAQQHDEDGIEEEDDDDDEIDD). The span at 360 to 374 (DGIEEEDDDDDEIDD) shows a compositional bias: acidic residues.

This sequence belongs to the importin beta family. Importin beta-2 subfamily. In terms of assembly, identified in a complex that contains TNPO1, RAN and RANBP1. Binds HNRPA1, HNRPA2, HNRNPDL, RPS7, RPL5 and RAN. Interacts with H2A, H2B, H3 and H4 histones. Interacts with isoform 1 and isoform 5 of ADAR/ADAR1 (via DRBM 3 domain). Interacts with SNAI1 (via zinc fingers); the interaction mediates SNAI1 nuclear import. Interacts with SNAI2 (via zinc fingers). Interacts with RPL23A (via BIB domain) and SRP19; this interaction is involved in RPL23A and SRP19 import into the nucleus. Interacts (via HEAT repeats 8-12) with BAP1 (via non-classical PY-NLS); this interaction is direct, is involved in BAP1 nuclear import and disrupts BAP1 homodimerization. As to quaternary structure, (Microbial infection) Binds to HIV-1 Rev.

The protein resides in the cytoplasm. It is found in the nucleus. Functionally, functions in nuclear protein import as nuclear transport receptor. Serves as receptor for nuclear localization signals (NLS) in cargo substrates. May mediate docking of the importin/substrate complex to the nuclear pore complex (NPC) through binding to nucleoporin and the complex is subsequently translocated through the pore by an energy requiring, Ran-dependent mechanism. At the nucleoplasmic side of the NPC, Ran binds to the importin, the importin/substrate complex dissociates and importin is re-exported from the nucleus to the cytoplasm where GTP hydrolysis releases Ran. The directionality of nuclear import is thought to be conferred by an asymmetric distribution of the GTP- and GDP-bound forms of Ran between the cytoplasm and nucleus. Involved in nuclear import of M9-containing proteins. In vitro, binds directly to the M9 region of the heterogeneous nuclear ribonucleoproteins (hnRNP), A1 and A2 and mediates their nuclear import. Involved in hnRNP A1/A2 nuclear export. Mediates the nuclear import of ribosomal proteins RPL23A, RPS7 and RPL5. In vitro, mediates nuclear import of H2A, H2B, H3 and H4 histones. In vitro, mediates nuclear import of SRP19. Mediates nuclear import of ADAR/ADAR1 isoform 1 and isoform 5 in a RanGTP-dependent manner. Main mediator of PR-DUB complex component BAP1 nuclear import; acts redundantly with the karyopherins KPNA1 and KPNA2. In terms of biological role, (Microbial infection) In case of HIV-1 infection, binds and mediates the nuclear import of HIV-1 Rev. The sequence is that of Transportin-1 (TNPO1) from Homo sapiens (Human).